The following is a 267-amino-acid chain: Large ribosomal subunit protein uL4 (267 aa).

This sequence belongs to the universal ribosomal protein uL4 family. As to quaternary structure, part of the 50S ribosomal subunit.

In terms of biological role, one of the primary rRNA binding proteins, this protein initially binds near the 5'-end of the 23S rRNA. It is important during the early stages of 50S assembly. It makes multiple contacts with different domains of the 23S rRNA in the assembled 50S subunit and ribosome. Forms part of the polypeptide exit tunnel. The polypeptide is Large ribosomal subunit protein uL4 (Saccharolobus islandicus (strain M.16.27) (Sulfolobus islandicus)).